Consider the following 165-residue polypeptide: Shikimate kinase (165 aa).

11-16 (GAGKTT) contacts ATP. Thr15 provides a ligand contact to Mg(2+). Positions 33, 57, and 78 each coordinate substrate. Arg116 contributes to the ATP binding site. Position 134 (Arg134) interacts with substrate.

This sequence belongs to the shikimate kinase family. As to quaternary structure, monomer. Mg(2+) is required as a cofactor.

Its subcellular location is the cytoplasm. It catalyses the reaction shikimate + ATP = 3-phosphoshikimate + ADP + H(+). It participates in metabolic intermediate biosynthesis; chorismate biosynthesis; chorismate from D-erythrose 4-phosphate and phosphoenolpyruvate: step 5/7. In terms of biological role, catalyzes the specific phosphorylation of the 3-hydroxyl group of shikimic acid using ATP as a cosubstrate. The sequence is that of Shikimate kinase from Bacillus cereus (strain AH187).